Consider the following 56-residue polypeptide: Conotoxin Bu12 (56 aa).

Residues 1–2 form the signal peptide; that stretch reads TA. Positions 3-25 are excised as a propeptide; sequence EDSRGTQLHRALRKATKLPVSTR. 3 cysteine pairs are disulfide-bonded: Cys26/Cys40, Cys33/Cys44, and Cys39/Cys49.

Belongs to the conotoxin O1 superfamily. Expressed by the venom duct.

Its subcellular location is the secreted. The sequence is that of Conotoxin Bu12 from Conus bullatus (Bubble cone).